Here is a 564-residue protein sequence, read N- to C-terminus: NAD-dependent malic enzyme (564 aa).

Residue Tyr104 is the Proton donor of the active site. Arg157 serves as a coordination point for NAD(+). Lys175 acts as the Proton acceptor in catalysis. Residues Glu246, Asp247, and Asp270 each contribute to the a divalent metal cation site. The NAD(+) site is built by Asp270 and Asn417.

The protein belongs to the malic enzymes family. As to quaternary structure, homotetramer. The cofactor is Mg(2+). It depends on Mn(2+) as a cofactor.

The catalysed reaction is (S)-malate + NAD(+) = pyruvate + CO2 + NADH. It carries out the reaction oxaloacetate + H(+) = pyruvate + CO2. In Aeromonas hydrophila subsp. hydrophila (strain ATCC 7966 / DSM 30187 / BCRC 13018 / CCUG 14551 / JCM 1027 / KCTC 2358 / NCIMB 9240 / NCTC 8049), this protein is NAD-dependent malic enzyme.